Reading from the N-terminus, the 298-residue chain is Golgi to ER traffic protein 2 (298 aa).

The Cytoplasmic segment spans residues 1 to 164; sequence MSEPVVDTAE…LEYNTYNQKL (164 aa). A disordered region spans residues 40 to 92; sequence ILSQGSSVKTSGVKSVLDQEKEATPSHDEDPEIQDITEITTPPPRTPPIGEDA. A compositionally biased stretch (low complexity) spans 42–55; it reads SQGSSVKTSGVKSV. Over residues 56–67 the composition is skewed to basic and acidic residues; it reads LDQEKEATPSHD. The chain crosses the membrane as a helical span at residues 165-185; sequence WKFRFLLVRVSVTLFNFFYHY. Residues 186–211 lie on the Lumenal side of the membrane; sequence INLSNFHASNYAYVRDLSSEKYPVRD. The helical transmembrane segment at 212-231 threads the bilayer; it reads FFTWFATTEVVLVAAYYSIF. Topologically, residues 232–275 are cytoplasmic; it reads HSLGLFHAANQNSFVLKAMSMGSMVLPQLEHYKPLVARFLGYYE. The chain crosses the membrane as a helical span at residues 276-296; that stretch reads LLGIVLGDLSLVIVLFGLLSF. At 297–298 the chain is on the lumenal side; sequence AN.

This sequence belongs to the GET2 family. In terms of assembly, component of the Golgi to ER traffic (GET) complex, which is composed of GET1, GET2 and GET3. Within the complex, GET1 and GET2 form a heterotetramer which is stabilized by phosphatidylinositol binding and which binds to the GET3 homodimer.

The protein localises to the endoplasmic reticulum membrane. Its subcellular location is the golgi apparatus membrane. Required for the post-translational delivery of tail-anchored (TA) proteins to the endoplasmic reticulum. Together with GET1, acts as a membrane receptor for soluble GET3, which recognizes and selectively binds the transmembrane domain of TA proteins in the cytosol. The GET complex cooperates with the HDEL receptor ERD2 to mediate the ATP-dependent retrieval of resident ER proteins that contain a C-terminal H-D-E-L retention signal from the Golgi to the ER. This chain is Golgi to ER traffic protein 2, found in Candida albicans (strain SC5314 / ATCC MYA-2876) (Yeast).